We begin with the raw amino-acid sequence, 207 residues long: MLNKLSLLLKDAGISLTDHQKNQLIAYVNMLHKWNKAYNLTSVRDPNEMLVRHILDSIVVAPYLQGERFIDVGTGPGLPGIPLSIVRPEAHFTLLDSLGKRVRFLRQVQHELKLENIEPVQSRVEEFPSEPPFDGVISRAFASLNDMVSWCHHLPGEQGRFYALKGQMPEDEIALLPEEYQVESVVKLQVPALDGERHLVVIKANKI.

S-adenosyl-L-methionine is bound by residues G73, L78, 124–125 (VE), and R139.

It belongs to the methyltransferase superfamily. RNA methyltransferase RsmG family.

The protein resides in the cytoplasm. It catalyses the reaction guanosine(527) in 16S rRNA + S-adenosyl-L-methionine = N(7)-methylguanosine(527) in 16S rRNA + S-adenosyl-L-homocysteine. In terms of biological role, specifically methylates the N7 position of guanine in position 527 of 16S rRNA. The chain is Ribosomal RNA small subunit methyltransferase G from Escherichia coli O1:K1 / APEC.